A 313-amino-acid polypeptide reads, in one-letter code: CBK1 kinase activator protein MOB2 (313 aa).

Positions 1–109 (MSFLNTIRGL…KRSSIQTTKS (109 aa)) are disordered. Positions 23-69 (PSNNAIYSHSNLSGNGLRRTQSPTKFSPSKLSSKGAQGSAAYTSSPT) are enriched in polar residues. Phosphoserine; by CDC28 is present on residues serine 44, serine 51, serine 67, and serine 97. Residues 76-97 (QSLQHQDSQSSLQYQQQSGSVS) show a composition bias toward low complexity. The segment covering 98–109 (PSKRSSIQTTKS) has biased composition (polar residues).

Belongs to the MOB1/phocein family. As to quaternary structure, interacts with protein kinase CBK1 to form the RAM CBK1-MOB2 kinase complex. Phosphorylated by CDC28 at Ser-44, Ser-51, Ser-67, and Ser-97. Phosphorylation occurs during bud emergence and is maintained until the G2/M transition. Dephosphorylated at the end of mitosis. Phosphorylation is required for the maintenance of polarisome components in hyphae.

The protein resides in the nucleus. It localises to the cytoplasm. In terms of biological role, functions as an activator subunit for the CBK1 protein kinase. Part of the regulation of ACE2 activity and cellular morphogenesis (RAM) signaling network. The RAM network is critically required for hyphal growth as well as normal vegetative growth, and for polarization of lipid rafts and the actin cytoskeleton. It play an essential role in biofilm formation. The RAM network also plays a role in serum- and antifungal azoles-induced activation of ergosterol biosynthesis genes, especially those involved in the late steps of ergosterol biosynthesis. The sequence is that of CBK1 kinase activator protein MOB2 (MOB2) from Candida albicans (strain SC5314 / ATCC MYA-2876) (Yeast).